Consider the following 168-residue polypeptide: Quinol oxidase subunit 2 (168 aa).

Residues 9-31 (EVWFIVMLVLVLIFFSWNVYYLS) form a helical membrane-spanning segment.

Belongs to the cytochrome c oxidase subunit 2 family.

It localises to the cell membrane. The enzyme catalyses 2 a quinol + O2 = 2 a quinone + 2 H2O. In terms of biological role, the terminal oxidase is the component of the respiratory chain that catalyzes the reduction of oxygen to water. Subunits 1-3 form the functional core of the enzyme complex. Subunit 2 transfers the electrons from caldariella quinol to the bimetallic center of the catalytic subunit 1 that is formed by heme A3 and Cu(B). This Sulfolobus acidocaldarius (strain ATCC 33909 / DSM 639 / JCM 8929 / NBRC 15157 / NCIMB 11770) protein is Quinol oxidase subunit 2 (soxA).